The sequence spans 26 residues: Oxyopinin-3a (26 aa).

Expressed by the venom gland.

The protein localises to the secreted. Its function is as follows. May have cytolytic and antimicrobial activity. The polypeptide is Oxyopinin-3a (Oxyopes takobius (Lynx spider)).